Reading from the N-terminus, the 417-residue chain is Serine hydroxymethyltransferase (417 aa).

Residues leucine 121 and 125-127 each bind (6S)-5,6,7,8-tetrahydrofolate; that span reads GHL. Lysine 229 is subject to N6-(pyridoxal phosphate)lysine. Residue 355–357 participates in (6S)-5,6,7,8-tetrahydrofolate binding; sequence SPF.

This sequence belongs to the SHMT family. Homodimer. The cofactor is pyridoxal 5'-phosphate.

Its subcellular location is the cytoplasm. The enzyme catalyses (6R)-5,10-methylene-5,6,7,8-tetrahydrofolate + glycine + H2O = (6S)-5,6,7,8-tetrahydrofolate + L-serine. The protein operates within one-carbon metabolism; tetrahydrofolate interconversion. It participates in amino-acid biosynthesis; glycine biosynthesis; glycine from L-serine: step 1/1. Catalyzes the reversible interconversion of serine and glycine with tetrahydrofolate (THF) serving as the one-carbon carrier. This reaction serves as the major source of one-carbon groups required for the biosynthesis of purines, thymidylate, methionine, and other important biomolecules. Also exhibits THF-independent aldolase activity toward beta-hydroxyamino acids, producing glycine and aldehydes, via a retro-aldol mechanism. This chain is Serine hydroxymethyltransferase, found in Citrobacter koseri (strain ATCC BAA-895 / CDC 4225-83 / SGSC4696).